The following is a 103-amino-acid chain: Large ribosomal subunit protein eL14 (103 aa).

The protein belongs to the eukaryotic ribosomal protein eL14 family.

This chain is Large ribosomal subunit protein eL14, found in Pyrobaculum aerophilum (strain ATCC 51768 / DSM 7523 / JCM 9630 / CIP 104966 / NBRC 100827 / IM2).